The following is a 362-amino-acid chain: Serine/threonine-protein phosphatase 2A activator 1 (362 aa).

Residues 1-10 (MQPHTQPPQP) are compositionally biased toward pro residues. Disordered regions lie at residues 1-28 (MQPHTQPPQPEASSSRAVHIPSDPAPPR) and 339-362 (NVEERGDKNEGKGTDAGTKAPWAR). Positions 340–351 (VEERGDKNEGKG) are enriched in basic and acidic residues.

This sequence belongs to the PTPA-type PPIase family.

The protein localises to the cytoplasm. Its subcellular location is the nucleus. It catalyses the reaction [protein]-peptidylproline (omega=180) = [protein]-peptidylproline (omega=0). Functionally, PPIases accelerate the folding of proteins. It catalyzes the cis-trans isomerization of proline imidic peptide bonds in oligopeptides. Acts as a regulatory subunit for PP2A-like phosphatases modulating their activity or substrate specificity, probably by inducing a conformational change in the catalytic subunit, a direct target of the PPIase. Can reactivate inactive phosphatase PP2A-phosphatase methylesterase complexes (PP2Ai) in presence of ATP and Mg(2+) by dissociating the inactive form from the complex. This is Serine/threonine-protein phosphatase 2A activator 1 (RRD1) from Cryptococcus neoformans var. neoformans serotype D (strain B-3501A) (Filobasidiella neoformans).